Here is a 330-residue protein sequence, read N- to C-terminus: Olfactory receptor 5T9 (330 aa).

Over 1–37 (MSIHSPGYTVRRIPVNNVTDTTMFILTGFTDDADLQV) the chain is Extracellular. An N-linked (GlcNAc...) asparagine glycan is attached at N17. A helical transmembrane segment spans residues 38–58 (LLFLLFFVIYLFTLIGNLGLV). Topologically, residues 59 to 66 (LLVIGDSR) are cytoplasmic. The helical transmembrane segment at 67–87 (LHNPMYYFLSVLSFLDACYST) threads the bilayer. Residues 88–111 (VVTPKMLVNFISNDKSISYPGCVT) are Extracellular-facing. Residues C109 and C201 are joined by a disulfide bond. A helical transmembrane segment spans residues 112-132 (EMFLFVTFGTTECFLLAAMAY). At 133–145 (DRFVAIYNPLLYA) the chain is on the cytoplasmic side. Residues 146 to 166 (VKMSPRVYIPLIIACYSGGIM) traverse the membrane as a helical segment. The Extracellular segment spans residues 167–208 (HATIHTVATFSLSFCASNEIRHVFCDIPPLLAISCSNTNINQ). Residues 209–229 (LLLFYCVGSIEIITILIVLVS) form a helical membrane-spanning segment. Over 230–249 (YSFILFAILKMNSAEGRRKI) the chain is Cytoplasmic. A helical transmembrane segment spans residues 250-270 (FSTCGSHLTGVSIYHGTILFM). Over 271–283 (YVRPSSNYALEHD) the chain is Extracellular. A helical transmembrane segment spans residues 284 to 304 (MIVSTFYTIVIPMLNPIIYSL). The Cytoplasmic segment spans residues 305–330 (RNKDVKEAMKKIFERNFFMNKVHFKL).

Belongs to the G-protein coupled receptor 1 family.

The protein resides in the cell membrane. In terms of biological role, potential odorant receptor. This is Olfactory receptor 5T9 from Mus musculus (Mouse).